Reading from the N-terminus, the 284-residue chain is Probable endonuclease 4 (284 aa).

Histidine 69, histidine 109, glutamate 145, aspartate 179, histidine 182, histidine 216, aspartate 229, histidine 231, and glutamate 261 together coordinate Zn(2+).

Belongs to the AP endonuclease 2 family. The cofactor is Zn(2+).

It carries out the reaction Endonucleolytic cleavage to 5'-phosphooligonucleotide end-products.. Functionally, endonuclease IV plays a role in DNA repair. It cleaves phosphodiester bonds at apurinic or apyrimidinic (AP) sites, generating a 3'-hydroxyl group and a 5'-terminal sugar phosphate. The chain is Probable endonuclease 4 from Chlorobium phaeobacteroides (strain BS1).